The chain runs to 40 residues: Alpha-1B-glycoprotein (40 aa).

An N-linked (GlcNAc...) asparagine glycan is attached at Asn23.

Interacts with CRISP3. In terms of tissue distribution, plasma.

Its subcellular location is the secreted. The protein is Alpha-1B-glycoprotein (A1BG) of Sus scrofa (Pig).